Reading from the N-terminus, the 101-residue chain is Small ribosomal subunit protein uS10 (101 aa).

Belongs to the universal ribosomal protein uS10 family. As to quaternary structure, part of the 30S ribosomal subunit.

In terms of biological role, involved in the binding of tRNA to the ribosomes. The chain is Small ribosomal subunit protein uS10 from Mycobacterium ulcerans (strain Agy99).